Consider the following 523-residue polypeptide: 2-isopropylmalate synthase (523 aa).

The 263-residue stretch at 5–267 (VIIFDTTLRD…HTAINHQEIW (263 aa)) folds into the Pyruvate carboxyltransferase domain. Mn(2+)-binding residues include aspartate 14, histidine 202, histidine 204, and asparagine 238. Residues 392–523 (RLDYFSVQSG…QHNENNKETV (132 aa)) are regulatory domain.

It belongs to the alpha-IPM synthase/homocitrate synthase family. LeuA type 1 subfamily. As to quaternary structure, homodimer. Requires Mn(2+) as cofactor.

It localises to the cytoplasm. The enzyme catalyses 3-methyl-2-oxobutanoate + acetyl-CoA + H2O = (2S)-2-isopropylmalate + CoA + H(+). It functions in the pathway amino-acid biosynthesis; L-leucine biosynthesis; L-leucine from 3-methyl-2-oxobutanoate: step 1/4. Catalyzes the condensation of the acetyl group of acetyl-CoA with 3-methyl-2-oxobutanoate (2-ketoisovalerate) to form 3-carboxy-3-hydroxy-4-methylpentanoate (2-isopropylmalate). This is 2-isopropylmalate synthase from Escherichia coli O45:K1 (strain S88 / ExPEC).